The following is a 276-amino-acid chain: 2-dehydro-3-deoxyphosphooctonate aldolase (276 aa).

It belongs to the KdsA family.

It localises to the cytoplasm. It catalyses the reaction D-arabinose 5-phosphate + phosphoenolpyruvate + H2O = 3-deoxy-alpha-D-manno-2-octulosonate-8-phosphate + phosphate. Its pathway is carbohydrate biosynthesis; 3-deoxy-D-manno-octulosonate biosynthesis; 3-deoxy-D-manno-octulosonate from D-ribulose 5-phosphate: step 2/3. It participates in bacterial outer membrane biogenesis; lipopolysaccharide biosynthesis. In Stenotrophomonas maltophilia (strain R551-3), this protein is 2-dehydro-3-deoxyphosphooctonate aldolase.